The chain runs to 122 residues: Large ribosomal subunit protein uL14 (122 aa).

It belongs to the universal ribosomal protein uL14 family. Part of the 50S ribosomal subunit. Forms a cluster with proteins L3 and L19. In the 70S ribosome, L14 and L19 interact and together make contacts with the 16S rRNA in bridges B5 and B8.

Binds to 23S rRNA. Forms part of two intersubunit bridges in the 70S ribosome. The polypeptide is Large ribosomal subunit protein uL14 (Chloroflexus aurantiacus (strain ATCC 29366 / DSM 635 / J-10-fl)).